The following is a 149-amino-acid chain: SsrA-binding protein (149 aa).

It belongs to the SmpB family.

The protein resides in the cytoplasm. In terms of biological role, required for rescue of stalled ribosomes mediated by trans-translation. Binds to transfer-messenger RNA (tmRNA), required for stable association of tmRNA with ribosomes. tmRNA and SmpB together mimic tRNA shape, replacing the anticodon stem-loop with SmpB. tmRNA is encoded by the ssrA gene; the 2 termini fold to resemble tRNA(Ala) and it encodes a 'tag peptide', a short internal open reading frame. During trans-translation Ala-aminoacylated tmRNA acts like a tRNA, entering the A-site of stalled ribosomes, displacing the stalled mRNA. The ribosome then switches to translate the ORF on the tmRNA; the nascent peptide is terminated with the 'tag peptide' encoded by the tmRNA and targeted for degradation. The ribosome is freed to recommence translation, which seems to be the essential function of trans-translation. This chain is SsrA-binding protein, found in Fervidobacterium nodosum (strain ATCC 35602 / DSM 5306 / Rt17-B1).